The primary structure comprises 154 residues: Small ribosomal subunit protein uS13m (154 aa).

Residues 1–30 (MLGLRRSATTLFDISQSLLRNVTFHGLRVQ) constitute a mitochondrion transit peptide. The disordered stretch occupies residues 121 to 154 (RHGLPCRGQRTSTNARTKKGKAVAIAGKKKAPRK). Over residues 136-154 (RTKKGKAVAIAGKKKAPRK) the composition is skewed to basic residues.

The protein belongs to the universal ribosomal protein uS13 family. In terms of assembly, part of the small ribosomal subunit.

The protein resides in the mitochondrion. Its function is as follows. Located at the top of the head of the small subunit, it contacts several helices of the 18S rRNA. The chain is Small ribosomal subunit protein uS13m (RPS13) from Arabidopsis thaliana (Mouse-ear cress).